The following is a 337-amino-acid chain: Peroxisome biogenesis factor 10 (337 aa).

The Peroxisomal matrix portion of the chain corresponds to 1–24 (MKNDNKLQKEALMRLSQLRFPFAD). Residues 25 to 54 (APSIVQAHQKDEQIQGLLIMKVTELCKLIK) form a helical membrane-spanning segment. A topological domain (cytoplasmic) is located at residue S55. The helical transmembrane segment at 56–77 (QLFVNSYPKELSIFAKLLYLLF) threads the bilayer. At 78-105 (TTGRRGRTLGEEYVDLTYTNRKGTRLAG) the chain is on the peroxisomal matrix side. The helical transmembrane segment at 106 to 138 (RLKMIVFAFAYPLCPYFITKLYKKIMKNNKESK) threads the bilayer. Over 139–145 (IEDTESV) the chain is Cytoplasmic. Residues 146-166 (AAFCKGLLDFILDVHMTLFYF) traverse the membrane as a helical segment. The Peroxisomal matrix portion of the chain corresponds to 167–202 (KGAFYSISKRIFGMRYVFKHILSKNEANFREEGSQK). The chain crosses the membrane as a helical span at residues 203-222 (YKVLGYILLAQNVMKWYPVL). Over 223 to 337 (TSTLGSWIYG…QPQEILVLRQ (115 aa)) the chain is Cytoplasmic. The Zn(2+) site is built by C286, C289, C301, H303, C306, C309, C320, and C323. The RING-type zinc finger occupies 286–327 (CILCLMNMSDPSCAPCGHLFCWSCLMSWCKERPECPLCRQHC).

The protein belongs to the pex2/pex10/pex12 family. As to quaternary structure, component of the PEX2-PEX10-PEX12 retrotranslocation channel, composed of PEX2, PEX10 and PEX12.

The protein resides in the peroxisome membrane. It carries out the reaction S-ubiquitinyl-[E2 ubiquitin-conjugating enzyme]-L-cysteine + [acceptor protein]-L-lysine = [E2 ubiquitin-conjugating enzyme]-L-cysteine + N(6)-ubiquitinyl-[acceptor protein]-L-lysine.. It functions in the pathway protein modification; protein ubiquitination. Its activity is regulated as follows. The E3 ubiquitin-protein ligase activity is stimulated by PEX12. In terms of biological role, E3 ubiquitin-protein ligase component of a retrotranslocation channel required for peroxisome organization by mediating export of the PEX5 receptor from peroxisomes to the cytosol, thereby promoting PEX5 recycling. The retrotranslocation channel is composed of PEX2, PEX10 and PEX12; each subunit contributing transmembrane segments that coassemble into an open channel that specifically allows the passage of PEX5 through the peroxisomal membrane. PEX10 also regulates PEX5 recycling by acting as a E3 ubiquitin-protein ligase. When PEX5 recycling is compromised, PEX10 catalyzes polyubiquitination of PEX5 during its passage through the retrotranslocation channel, leading to its degradation. The polypeptide is Peroxisome biogenesis factor 10 (Saccharomyces cerevisiae (strain ATCC 204508 / S288c) (Baker's yeast)).